The sequence spans 276 residues: S-adenosylmethionine-dependent nucleotide dehydratase (276 aa).

Residues 6-216 (TSVRKFRSAN…RRRHEDIGCI (211 aa)) enclose the Radical SAM core domain. [4Fe-4S] cluster contacts are provided by C22, C26, and C29.

Belongs to the radical SAM superfamily. Viperin family. It depends on [4Fe-4S] cluster as a cofactor.

The enzyme catalyses CTP + AH2 + S-adenosyl-L-methionine = 3'-deoxy-3',4'-didehydro-CTP + 5'-deoxyadenosine + L-methionine + A + H2O + H(+). In terms of biological role, expression of pVip50 in E.coli (strain MG1655) confers resistance to phage P1; has no effect against T7. Catalyzes the conversion of cytosine triphosphate (CTP) to 3'-deoxy-3',4'-didehydro-CTP (ddhCTP), probably via a SAM-dependent radical mechanism. The modified nucleotide represses transcription from T7 RNA polymerase-directed genes (possibly by acting as chain terminators), strongly suggesting these nucleotides block viral polymerase transcription. How this protein allows bacteria to resist viruses that do not encode their own RNA polymerase (such as lambda, P1) is unknown. The polypeptide is S-adenosylmethionine-dependent nucleotide dehydratase (Thermoplasmatales archaeon (strain ISO4-H5)).